Consider the following 104-residue polypeptide: Protein translation factor SUI1 homolog (104 aa).

It belongs to the SUI1 family.

The sequence is that of Protein translation factor SUI1 homolog from Ignicoccus hospitalis (strain KIN4/I / DSM 18386 / JCM 14125).